Reading from the N-terminus, the 124-residue chain is Small ribosomal subunit protein uS13 (124 aa).

A disordered region spans residues 95–124; sequence GLPVRGQRTKTNARTRKGPKRTIAGKKKAR.

This sequence belongs to the universal ribosomal protein uS13 family. Part of the 30S ribosomal subunit. Forms a loose heterodimer with protein S19. Forms two bridges to the 50S subunit in the 70S ribosome.

In terms of biological role, located at the top of the head of the 30S subunit, it contacts several helices of the 16S rRNA. In the 70S ribosome it contacts the 23S rRNA (bridge B1a) and protein L5 of the 50S subunit (bridge B1b), connecting the 2 subunits; these bridges are implicated in subunit movement. Contacts the tRNAs in the A and P-sites. This Mycobacterium marinum (strain ATCC BAA-535 / M) protein is Small ribosomal subunit protein uS13.